Reading from the N-terminus, the 471-residue chain is 5-hydroxytryptamine receptor 2A (471 aa).

At 1-80 (MDILCEENTS…LQEKNWSALL (80 aa)) the chain is on the extracellular side. Residues N8, N38, N44, N51, and N54 are each glycosylated (N-linked (GlcNAc...) asparagine). A helical membrane pass occupies residues 81 to 97 (TAVVIILTIAGNILVIM). Topologically, residues 98–111 (AVSLEKKLQNATNY) are cytoplasmic. A helical membrane pass occupies residues 112–137 (FLMSLAIADMLLGFLVMPVSMLTILY). Topologically, residues 138 to 146 (GYRWPLPSK) are extracellular. Residues 147 to 171 (LCAVWIYLDVLFSTASIMHLCAISL) traverse the membrane as a helical segment. An intrachain disulfide couples C148 to C227. Residue D155 coordinates serotonin. The DRY motif; important for ligand-induced conformation changes signature appears at 172–174 (DRY). Residues 172–191 (DRYVAIQNPIHHSRFNSRTK) lie on the Cytoplasmic side of the membrane. Residues 192–215 (AFLKIIAVWTISVGISMPIPVFGL) traverse the membrane as a helical segment. Over 216–232 (QDDSKVFKEGSCLLADD) the chain is Extracellular. A helical membrane pass occupies residues 233 to 258 (NFVLIGSFVSFFIPLTIMVITYFLTI). The Cytoplasmic segment spans residues 259–322 (KSLQKEATLC…QSISNEQKAC (64 aa)). S280 is subject to Phosphoserine. Residues 323-348 (KVLGIVFFLFVVMWCPFFITNIMAVI) form a helical membrane-spanning segment. A serotonin-binding site is contributed by N343. C349 and C353 are joined by a disulfide. Residues 349 to 356 (CKESCNED) are Extracellular-facing. The helical transmembrane segment at 357–382 (VIGALLNVFVWIGYLSSAVNPLVYTL) threads the bilayer. Residues 376–380 (NPLVY) carry the NPxxY motif; important for ligand-induced conformation changes and signaling motif. At 383–471 (FNKTYRSAFS…DGVNEKVSCV (89 aa)) the chain is on the cytoplasmic side. Basic and acidic residues predominate over residues 451–465 (QHSEEASKDNSDGVN). The tract at residues 451–471 (QHSEEASKDNSDGVNEKVSCV) is disordered. The PDZ-binding signature appears at 469–471 (SCV).

Belongs to the G-protein coupled receptor 1 family. As to quaternary structure, interacts (via C-terminus) with MPDZ and PATJ. May interact (via C-terminus) with MPP3, PRDX6, DLG4, DLG1, CASK, APBA1 and MAGI2. Interacts with GRM2 and DRD2; this may affect signaling. As to expression, detected in brain cortex (at protein level). Detected in blood platelets.

Its subcellular location is the cell membrane. It is found in the cell projection. The protein resides in the dendrite. It localises to the axon. The protein localises to the cytoplasmic vesicle. Its subcellular location is the membrane. It is found in the caveola. The protein resides in the presynapse. Its activity is regulated as follows. G-protein coupled receptor activity is regulated by lipids: oleamide increases HTR2A-mediated activity. Inhibited by IHCH-7179 small molecule: IHCH-7179 acts both as an agonist activator for HTR1A and as an antagonist inhibitor for HTR2A. Its function is as follows. G-protein coupled receptor for 5-hydroxytryptamine (serotonin). Also functions as a receptor for various drugs and psychoactive substances, including mescaline, psilocybin, 1-(2,5-dimethoxy-4-iodophenyl)-2-aminopropane (DOI) and lysergic acid diethylamide (LSD). Ligand binding causes a conformation change that triggers signaling via guanine nucleotide-binding proteins (G proteins) and modulates the activity of downstream effectors. HTR2A is coupled to G(q)/G(11) G alpha proteins and activates phospholipase C-beta, releasing diacylglycerol (DAG) and inositol 1,4,5-trisphosphate (IP3) second messengers that modulate the activity of phosphatidylinositol 3-kinase and promote the release of Ca(2+) ions from intracellular stores, respectively. Beta-arrestin family members inhibit signaling via G proteins and mediate activation of alternative signaling pathways. Affects neural activity, perception, cognition and mood. Plays a role in the regulation of behavior, including responses to anxiogenic situations and psychoactive substances. Plays a role in intestinal smooth muscle contraction, and may play a role in arterial vasoconstriction. (Microbial infection) Acts as a receptor for human JC polyomavirus/JCPyV. The protein is 5-hydroxytryptamine receptor 2A of Homo sapiens (Human).